The primary structure comprises 339 residues: UDP-glucose 4-epimerase (339 aa).

NAD(+) contacts are provided by residues 10-12 (GYI), 31-35 (DNLSN), 58-59 (DL), Phe80, and Lys84. Substrate is bound at residue 124–126 (SAT). Tyr148 acts as the Proton acceptor in catalysis. Positions 152 and 176 each coordinate NAD(+). Residues 176–178 (YFN), 197–199 (NNL), Arg230, and 291–294 (RPGD) each bind substrate.

The protein belongs to the NAD(P)-dependent epimerase/dehydratase family. NAD(+) is required as a cofactor.

The enzyme catalyses UDP-alpha-D-glucose = UDP-alpha-D-galactose. The catalysed reaction is UDP-N-acetyl-alpha-D-glucosamine = UDP-N-acetyl-alpha-D-galactosamine. The protein operates within cell wall biogenesis; teichoic acid biosynthesis. Catalyzes two distinct but analogous reactions: the reversible epimerization of UDP-glucose to UDP-galactose and the reversible epimerization of UDP-N-acetylglucosamine to UDP-N-acetylgalactosamine. The enzyme is more efficient in catalyzing the interconversion between unacetylated than between corresponding N-acetylated substrates. Essential for growth in media containing either glucose or galactose. May protect the cell from the toxic effects of galactose and glucose or derivatives of both sugars. Involved in the biosynthesis of teichoic acids via the formation of UDP-N-acetylgalactosamine. Influences cell division. The chain is UDP-glucose 4-epimerase from Bacillus subtilis (strain 168).